The chain runs to 369 residues: MTKFKHLLALAALLLAAGAAQAERLKDIASIQGVRTNQLIGYGLVVGLSGSGDQTTQTPFTLQTFNNMLAQFGIKVPANVGNVQLKNVAAVSVHADLPPFAKPGQPIDVTVSSIGNAKSLRGGSLLMTPLKGIDGQVYAVAQGNLVVGGFDAEGRDGSKITVNVPSAGRIPAGATVERAVPSGFDQGNSLTLNLNRPDFTTAKRIVDRINELLGPGVAHAVDGGSVRVSAPLDPNQRVDYLSILENLDVQPGEAVAKVIINSRTGTIVIGQNVKVSPAAVTHGSLTVSITEDPIVSQPGAFSNGQTAVVPRSRVNAEEETKPMFKFGPGTTLDDIVRAVNQVGAAPSDLMAILEALKQAGALQADLIVI.

The signal sequence occupies residues 1-22 (MTKFKHLLALAALLLAAGAAQA).

Belongs to the FlgI family. The basal body constitutes a major portion of the flagellar organelle and consists of four rings (L,P,S, and M) mounted on a central rod.

The protein resides in the periplasm. The protein localises to the bacterial flagellum basal body. Its function is as follows. Assembles around the rod to form the L-ring and probably protects the motor/basal body from shearing forces during rotation. In Pseudomonas aeruginosa (strain LESB58), this protein is Flagellar P-ring protein.